The following is a 218-amino-acid chain: Glutathione S-transferase U24 (218 aa).

Residues 3 to 82 (DEVILLDFWA…YIDETWPDNN (80 aa)) form the GST N-terminal domain. Glutathione-binding positions include 13–14 (SM), 39–40 (NK), 53–54 (KI), and 66–67 (ES). The GST C-terminal domain maps to 88 to 215 (DPYKRAHAKF…TFISERRKKL (128 aa)). At threonine 148 the chain carries Phosphothreonine.

This sequence belongs to the GST superfamily. Tau family.

It is found in the cytoplasm. The protein localises to the cytosol. The enzyme catalyses RX + glutathione = an S-substituted glutathione + a halide anion + H(+). Its function is as follows. May be involved in the conjugation of reduced glutathione to a wide number of exogenous and endogenous hydrophobic electrophiles and have a detoxification role against certain herbicides. The polypeptide is Glutathione S-transferase U24 (GSTU24) (Arabidopsis thaliana (Mouse-ear cress)).